The sequence spans 266 residues: Type II pantothenate kinase (266 aa).

6–13 (DAGGTLIK) serves as a coordination point for ATP. Glu-70 serves as the catalytic Proton acceptor. ATP contacts are provided by residues Thr-99, 121–125 (GGMIQ), Tyr-137, and Ser-225.

It belongs to the type II pantothenate kinase family. Homodimer.

It localises to the cytoplasm. The catalysed reaction is (R)-pantothenate + ATP = (R)-4'-phosphopantothenate + ADP + H(+). It functions in the pathway cofactor biosynthesis; coenzyme A biosynthesis; CoA from (R)-pantothenate: step 1/5. Catalyzes the phosphorylation of pantothenate (Pan), the first step in CoA biosynthesis. This chain is Type II pantothenate kinase, found in Staphylococcus haemolyticus (strain JCSC1435).